The following is a 1797-amino-acid chain: Non-reducing polyketide synthase nscA (1797 aa).

Positions 17 to 256 (SDDLKDLFRR…PLPVYDGLCH (240 aa)) are N-terminal acylcarrier protein transacylase domain (SAT). The region spanning 392-825 (SSKLAIVGMA…GGNTTLLLED (434 aa)) is the Ketosynthase family 3 (KS3) domain. Active-site for beta-ketoacyl synthase activity residues include C565, H700, and H743. Residues 931-1251 (FTGQGAYYSG…SLVTLHLAGL (321 aa)) are malonyl-CoA:ACP transacylase (MAT) domain. Residues 1318–1637 (TSLIHQITAE…RLLMDRFFSP (320 aa)) are product template (PT) domain. The tract at residues 1322–1458 (HQITAETIES…ATVRFEDPAA (137 aa)) is N-terminal hotdog fold. In terms of domain architecture, PKS/mFAS DH spans 1322–1632 (HQITAETIES…FRRVPRLLMD (311 aa)). The active-site Proton acceptor; for dehydratase activity is the H1354. A C-terminal hotdog fold region spans residues 1482–1632 (VEGKASRLSK…FRRVPRLLMD (151 aa)). Residue D1543 is the Proton donor; for dehydratase activity of the active site. Over residues 1663–1686 (SVPEISAPSPSIVVSDSTANNTLT) the composition is skewed to polar residues. Residues 1663–1723 (SVPEISAPSP…PESESAEPLG (61 aa)) form a disordered region. Low complexity predominate over residues 1698–1709 (SSSESSTPKESP). In terms of domain architecture, Carrier spans 1720-1797 (EPLGNTVSQC…EMTAWIEEYC (78 aa)). S1757 carries the O-(pantetheine 4'-phosphoryl)serine modification.

Requires pantetheine 4'-phosphate as cofactor.

It participates in secondary metabolite biosynthesis. Its function is as follows. Non-reducing polyketide synthase; part of the gene cluster that mediates the biosynthesis of neosartoricin B, a prenylated anthracenone that probably exhibits T-cell antiproliferative activity, suggestive of a physiological role as an immunosuppressive agent. The non-reducing polyketide synthase nscA probably synthesizes and cyclizes the decaketide backbone. The hydrolase nscB then mediates the product release through hydrolysis followed by spontaneous decarboxylation. The prenyltransferase nscD catalyzes the addition of the dimethylallyl group to the aromatic C5. The FAD-dependent monooxygenase nscC is then responsible for the stereospecific hydroxylation at C2. Neosartoricin B can be converted into two additional compounds neosartoricins C and D. Neosartoricin C is a spirocyclic compound that is cyclized through the attack of C3 hydroxyl on C14, followed by dehydration. On the other hand, neosartoricin D is a further cyclized compound in which attack of C2 on C14 in neosartoricin C results in the formation of the acetal-containing dioxabicyclo-octanone ring. Both of these compounds are novel and possibly represent related metabolites of the gene cluster. This is Non-reducing polyketide synthase nscA from Arthroderma gypseum (strain ATCC MYA-4604 / CBS 118893) (Microsporum gypseum).